A 372-amino-acid polypeptide reads, in one-letter code: Cyclin-dependent kinase 9 (372 aa).

Residues 19–315 (YEKLAKIGQG…SDDALNHDFF (297 aa)) enclose the Protein kinase domain. Residues 25–33 (IGQGTFGEV) and Lys-48 each bind ATP. Asp-149 (proton acceptor) is an active-site residue. Residues 341–372 (PPRRRGGHMPQQPANQGRNPAATNQTEFDRVF) are disordered. The span at 352 to 366 (QPANQGRNPAATNQT) shows a compositional bias: polar residues.

This sequence belongs to the protein kinase superfamily. CMGC Ser/Thr protein kinase family. CDC2/CDKX subfamily. In terms of assembly, associates with cyclin-T to form P-TEFb. Also associates with cyclin-K.

It localises to the nucleus. It carries out the reaction L-seryl-[protein] + ATP = O-phospho-L-seryl-[protein] + ADP + H(+). The enzyme catalyses L-threonyl-[protein] + ATP = O-phospho-L-threonyl-[protein] + ADP + H(+). It catalyses the reaction [DNA-directed RNA polymerase] + ATP = phospho-[DNA-directed RNA polymerase] + ADP + H(+). Its function is as follows. Member of the cyclin-dependent kinase pair (CDK9/cyclin-T) complex, also called positive transcription elongation factor b (P-TEFb), which facilitates the transition from abortive to production elongation by phosphorylating the CTD (C-terminal domain) of the large subunit of RNA polymerase II (RNAP II), SUPT5H and RDBP. The CDK9/cyclin-K complex also has a kinase activity toward CTD of RNAP II and can substitute for P-TEFb in vitro. This is Cyclin-dependent kinase 9 (CDK9) from Gallus gallus (Chicken).